The sequence spans 51 residues: Protein SspM (51 aa).

Belongs to the alpha/beta-type SASP family.

This Mycolicibacterium phlei (Mycobacterium phlei) protein is Protein SspM (sspM).